A 208-amino-acid chain; its full sequence is Cytidylate kinase (208 aa).

ATP is bound at residue 9–17 (GPSASGKSS).

This sequence belongs to the cytidylate kinase family. Type 1 subfamily.

Its subcellular location is the cytoplasm. The enzyme catalyses CMP + ATP = CDP + ADP. It carries out the reaction dCMP + ATP = dCDP + ADP. The polypeptide is Cytidylate kinase (Thermus thermophilus (strain ATCC BAA-163 / DSM 7039 / HB27)).